The chain runs to 175 residues: RNA pyrophosphohydrolase (175 aa).

A Nudix hydrolase domain is found at 6 to 149 (GYRPNVGIVI…KRDVYRRVMK (144 aa)). A Nudix box motif is present at residues 38–59 (GGINPGETPEQAMYRELFEEVG).

Belongs to the Nudix hydrolase family. RppH subfamily. A divalent metal cation is required as a cofactor.

In terms of biological role, accelerates the degradation of transcripts by removing pyrophosphate from the 5'-end of triphosphorylated RNA, leading to a more labile monophosphorylated state that can stimulate subsequent ribonuclease cleavage. This is RNA pyrophosphohydrolase from Yersinia pseudotuberculosis serotype O:1b (strain IP 31758).